The primary structure comprises 246 residues: Envelope glycoprotein gp95 (246 aa).

Over 1–192 (IPSRPVGGPC…EWAVHLLKGL (192 aa)) the chain is Extracellular. Residue Asn31 is glycosylated (N-linked (GlcNAc...) asparagine; by host). Cys50 and Cys86 are joined by a disulfide. The fusion peptide stretch occupies residues 58-78 (GPTARIFASILAPGVAAAQAL). Positions 75–125 (AQALKEIERLACWSVKQANLTTSLLGDLLDDVTSIRHAVLQNRAAIDFLLL) form a coiled coil. Asn93 is a glycosylation site (N-linked (GlcNAc...) asparagine; by host). The segment at 114 to 130 (LQNRAAIDFLLLAHGHG) is immunosuppression. Cys131 and Cys138 are joined by a disulfide. Asn141 carries an N-linked (GlcNAc...) asparagine; by host glycan. The stretch at 143–173 (SDHSESIQKKFQLMKEHVNKIGVDSDPIGSW) forms a coiled coil. Residues 193-213 (LLGLVVILLLVVCLPCLLQIV) traverse the membrane as a helical segment. S-palmitoyl cysteine; by host attachment occurs at residues Cys205 and Cys208. The Cytoplasmic portion of the chain corresponds to 214–246 (CGNIRKMINNSISYHTEYKKLQKAYGQPESRIV).

This sequence belongs to the Alpharetroviruses envelope glycoprotein family. As to quaternary structure, heterodimer with the transmembrane protein. The mature envelope protein (Env) consists of a trimer of SU-TM heterodimers attached by a labile interchain disulfide bond. In terms of assembly, heterodimer with the surface protein. The mature envelope protein (Env) consists of a trimer of SU-TM heterodimers attached by a labile interchain disulfide bond. In terms of processing, specific enzymatic cleavages in vivo yield mature proteins. Envelope glycoproteins are synthesized as an inactive precursor that is N-glycosylated and processed likely by host cell furin or by a furin-like protease in the Golgi to yield the mature SU and TM proteins. The cleavage site between SU and TM requires the minimal sequence [KR]-X-[KR]-R. Post-translationally, the transmembrane protein is palmitoylated. Palmitoylation is necessary for glycoprotein function and infectivity.

It localises to the virion membrane. It is found in the host cell membrane. In terms of biological role, the surface protein (SU) attaches the virus to the host cell by binding to its receptor. This interaction triggers the refolding of the transmembrane protein (TM) thereby unmasking its fusion peptide and the formation of a reactive thiolate to activate its fusogenic potential. Fusion occurs at the host cell plasma membrane. Its function is as follows. The transmembrane protein (TM) acts as a class I viral fusion protein. Under the current model, the protein has at least 3 conformational states: pre-fusion native state, pre-hairpin intermediate state, and post-fusion hairpin state. During viral and target cell membrane fusion, the coiled coil regions (heptad repeats) assume a trimer-of-hairpins structure, positioning the fusion peptide in close proximity to the C-terminal region of the ectodomain. The formation of this structure appears to drive apposition and subsequent fusion of viral and target cell membranes. Membranes fusion leads to delivery of the nucleocapsid into the cytoplasm. This is Envelope glycoprotein gp95 (env) from Galliformes.